A 399-amino-acid chain; its full sequence is Protein HYM1 (399 aa).

Residues 363–382 (VSNNNASSSNVASITSPSSV) show a composition bias toward low complexity. The disordered stretch occupies residues 363–399 (VSNNNASSSNVASITSPSSVMNNQSSILTHSTSPDSR). Residues 383–399 (MNNQSSILTHSTSPDSR) are compositionally biased toward polar residues.

Belongs to the Mo25 family.

This is Protein HYM1 (HYM1) from Saccharomyces cerevisiae (strain ATCC 204508 / S288c) (Baker's yeast).